The following is a 389-amino-acid chain: 5-amino-6-(D-ribitylamino)uracil--L-tyrosine 4-hydroxyphenyl transferase (389 aa).

The Radical SAM core domain occupies 56–298; that stretch reads VSYVINRNIN…QAVARLFFGR (243 aa). 3 residues coordinate [4Fe-4S] cluster: Cys70, Cys74, and Cys77.

This sequence belongs to the radical SAM superfamily. CofH family. In terms of assembly, consists of two subunits, CofG and CofH. [4Fe-4S] cluster is required as a cofactor.

The catalysed reaction is 5-amino-6-(D-ribitylamino)uracil + L-tyrosine + S-adenosyl-L-methionine = 5-amino-5-(4-hydroxybenzyl)-6-(D-ribitylimino)-5,6-dihydrouracil + 2-iminoacetate + 5'-deoxyadenosine + L-methionine + H(+). It functions in the pathway cofactor biosynthesis; coenzyme F0 biosynthesis. Catalyzes the radical-mediated synthesis of 5-amino-5-(4-hydroxybenzyl)-6-(D-ribitylimino)-5,6-dihydrouracil from 5-amino-6-(D-ribitylamino)uracil and L-tyrosine. The protein is 5-amino-6-(D-ribitylamino)uracil--L-tyrosine 4-hydroxyphenyl transferase of Gloeobacter violaceus (strain ATCC 29082 / PCC 7421).